The chain runs to 554 residues: Inactive sesquithujene synthase B (554 aa).

Mg(2+) contacts are provided by aspartate 308 and aspartate 312. Residues aspartate 308, aspartate 312, arginine 449, and asparagine 452 each coordinate substrate. The DDXXD motif signature appears at 308-312 (DDMFD). Mg(2+)-binding residues include asparagine 452, serine 456, and glutamate 460.

The protein belongs to the terpene synthase family. In terms of assembly, monomer. Requires Mg(2+) as cofactor. Mn(2+) serves as cofactor.

The protein resides in the cytoplasm. Its pathway is secondary metabolite biosynthesis; terpenoid biosynthesis. In terms of biological role, non-functional sesquiterpene synthase having less than 1% of the activity found in TPS5A. The polypeptide is Inactive sesquithujene synthase B (Zea mays (Maize)).